The sequence spans 77 residues: Conotoxin Vc6c (77 aa).

Positions methionine 1–alanine 22 are cleaved as a signal peptide. A propeptide spanning residues aspartate 23–arginine 51 is cleaved from the precursor. 3 disulfides stabilise this stretch: cysteine 52/cysteine 67, cysteine 59/cysteine 71, and cysteine 66/cysteine 76.

In terms of tissue distribution, expressed by the venom duct.

It is found in the secreted. The chain is Conotoxin Vc6c from Conus victoriae (Queen Victoria cone).